The chain runs to 484 residues: MKKNFILNFATKNVKEKKLSFGVGITLWALIVFAYMIFVMNWGFASAGLNGKAGISGYLGHFFPNANEAPGTVVNQAVNWGITIGRGIGSVLVGWLIVKISHKYTVILSLFFMLFGIIAPYSPTYAGFIILRTIFAIGGTMQIILIQPVVSNYLNQRQKAVISQFSPFFYPIGTIITLIPFAGIIGQEAQEAFRDNWQIVFLVIGLLTLIPLIGYIILGTKFDLYPSNIEKRNKQEKLSLATFFKQKDTWYWTILYGSWLVAVVFPFTFSKPIFHRLIGDSDGTFNDKISVFLIFFLAGMFLGPFTIGLLSKYQLQRRKYISTIITLGVFFYVLATVVFVLKVGKNYEYAKSYTDGWTWLFLFLGLFMGICLWGIQGVMLNLPHEYKGSNPYRVGFQFGLIWGLGYTAFTIATIITSLVNTPPGIDLKKLELNNVDGYALGAYILIIIFSLVSSIGLALLKEPNPEYKKLLKIRSFSEIERIKK.

Transmembrane regions (helical) follow at residues 19 to 39, 78 to 98, 110 to 130, 134 to 154, 165 to 185, 199 to 219, 249 to 269, 289 to 309, 321 to 341, 360 to 380, 398 to 418, and 440 to 460; these read LSFG…MIFV, VNWG…WLIV, LFFM…GFII, IFAI…SNYL, FSPF…AGII, IVFL…IILG, TWYW…PFTF, ISVF…TIGL, ISTI…VFVL, LFLF…GVML, FGLI…ITSL, and LGAY…LALL.

Its subcellular location is the cell membrane. This is an uncharacterized protein from Mesomycoplasma hyopneumoniae (strain J / ATCC 25934 / NCTC 10110) (Mycoplasma hyopneumoniae).